The chain runs to 414 residues: Apolipoprotein N-acyltransferase (414 aa).

Transmembrane regions (helical) follow at residues 19 to 39 (GIAL…HFGI), 40 to 60 (TSPL…LKLP), 63 to 83 (SGFA…ALSF), 91 to 111 (LIPF…SMAL), 121 to 141 (LLLW…VPEV), and 153 to 173 (LSFG…QRWL). A CN hydrolase domain is found at 202–414 (IETHIPQEIR…NRSPSGIIAP (213 aa)). E243 acts as the Proton acceptor in catalysis. Residue K298 is part of the active site. Residue C351 is the Nucleophile of the active site.

This sequence belongs to the CN hydrolase family. Apolipoprotein N-acyltransferase subfamily.

It is found in the cell inner membrane. The catalysed reaction is N-terminal S-1,2-diacyl-sn-glyceryl-L-cysteinyl-[lipoprotein] + a glycerophospholipid = N-acyl-S-1,2-diacyl-sn-glyceryl-L-cysteinyl-[lipoprotein] + a 2-acyl-sn-glycero-3-phospholipid + H(+). The protein operates within protein modification; lipoprotein biosynthesis (N-acyl transfer). In terms of biological role, catalyzes the phospholipid dependent N-acylation of the N-terminal cysteine of apolipoprotein, the last step in lipoprotein maturation. This chain is Apolipoprotein N-acyltransferase, found in Wolinella succinogenes (strain ATCC 29543 / DSM 1740 / CCUG 13145 / JCM 31913 / LMG 7466 / NCTC 11488 / FDC 602W) (Vibrio succinogenes).